We begin with the raw amino-acid sequence, 219 residues long: NAD(P)H-quinone oxidoreductase subunit I (219 aa).

4Fe-4S ferredoxin-type domains follow at residues 55-84 (GRIH…VDWV) and 95-124 (RNYS…MTEE). 8 residues coordinate [4Fe-4S] cluster: C64, C67, C70, C74, C104, C107, C110, and C114.

The protein belongs to the complex I 23 kDa subunit family. In terms of assembly, NDH-1 is composed of at least 11 different subunits. The cofactor is [4Fe-4S] cluster.

The protein localises to the cellular thylakoid membrane. The enzyme catalyses a plastoquinone + NADH + (n+1) H(+)(in) = a plastoquinol + NAD(+) + n H(+)(out). The catalysed reaction is a plastoquinone + NADPH + (n+1) H(+)(in) = a plastoquinol + NADP(+) + n H(+)(out). In terms of biological role, NDH-1 shuttles electrons from an unknown electron donor, via FMN and iron-sulfur (Fe-S) centers, to quinones in the respiratory and/or the photosynthetic chain. The immediate electron acceptor for the enzyme in this species is believed to be plastoquinone. Couples the redox reaction to proton translocation, and thus conserves the redox energy in a proton gradient. This chain is NAD(P)H-quinone oxidoreductase subunit I, found in Prochlorococcus marinus (strain SARG / CCMP1375 / SS120).